The sequence spans 207 residues: Fibroblast growth factor 18 (207 aa).

An N-terminal signal peptide occupies residues 1 to 27 (MYSAPSACTCLCLHFLLLCFQVQVLAA). N-linked (GlcNAc...) asparagine glycosylation is present at Asn39. Cys109 and Cys127 are disulfide-bonded. Asn137 carries N-linked (GlcNAc...) asparagine glycosylation.

Belongs to the heparin-binding growth factors family. Interacts with FGFR3 and FGFR4.

Its subcellular location is the secreted. Its function is as follows. Plays an important role in the regulation of cell proliferation, cell differentiation and cell migration. Required for normal ossification and bone development. Stimulates hepatic and intestinal proliferation. The sequence is that of Fibroblast growth factor 18 (Fgf18) from Mus musculus (Mouse).